We begin with the raw amino-acid sequence, 378 residues long: MASHSQVLVEEKSSVRILTFNRPKQLNALSFHMVSRLLQLFLAYEEDPSVKLVVLKGQGRAFSAGGDIPPIVRDILQGKLIRGAHYFKVGYTLNYVLSTYRKPQVSILNGIVMGGGAGLSTNGRFRIATENTVFAMPETALGLFPDVGASYFLSRLPGFFGEYVGLTGARLDGAEMLACGLATHFVPSISLTALEAELYKVGSSNQTFISTILDAYAEYPHLNQHSSYHRLDVIDRCFSKRTVEEIFSALEREVTQKPNDWLLATIQALEKASPSCLKISLRSIREGRLQGVGQCLIREYRMVCHVMKGDISKDFVEGCRAVLIDKDRNPKWQPRRLEDVTDSMVDQYFERVEDEEGWEDLKFPPRNNLPALAIAAKL.

Substrate contacts are provided by Gly115, Glu138, and Asp146. The Microbody targeting signal motif lies at 376–378 (AKL).

It belongs to the enoyl-CoA hydratase/isomerase family.

The protein localises to the peroxisome. The catalysed reaction is 3-hydroxy-2-methylpropanoyl-CoA + H2O = 3-hydroxy-2-methylpropanoate + CoA + H(+). The protein operates within amino-acid degradation; L-valine degradation. Its function is as follows. Involved in valine catabolism. In Arabidopsis thaliana (Mouse-ear cress), this protein is Probable 3-hydroxyisobutyryl-CoA hydrolase 2.